Consider the following 416-residue polypeptide: Lactose permease (416 aa).

At 1-13 (MKLSELAPRERHN) the chain is on the cytoplasmic side. Residues 14-34 (FIYFMLFFFFYYFIMSAYFPF) form a helical membrane-spanning segment. Residues 35 to 50 (FPVWLAEVNHLTKTET) are Periplasmic-facing. The chain crosses the membrane as a helical span at residues 51 to 71 (GIVFSCISLFAIIFQPVFGLI). Over 72-80 (SDKLGLRKH) the chain is Cytoplasmic. Residues 81-101 (LLWTITILLILFAPFFIFVFS) traverse the membrane as a helical segment. Position 102 (P102) is a topological domain, periplasmic. A helical membrane pass occupies residues 103–123 (LLQMNIMAGALVGGVYLGIVF). The Cytoplasmic portion of the chain corresponds to 124–149 (SSRSGAVEAYIERVSRANRFEYGKVR). Helical transmembrane passes span 150 to 170 (VSGC…FSID) and 171 to 191 (PNIT…LLWV). The Cytoplasmic portion of the chain corresponds to 192–223 (SKPESSNSAEVIDALGANRQAFSMRTAAELFR). A helical transmembrane segment spans residues 224–244 (MPRFWGFIIYVVGVASVYDVF). At 245 to 267 (DQQFANFFKGFFSSPQRGTEVFG) the chain is on the periplasmic side. Residues 268-288 (FVTTGGELLNALIMFCAPAII) form a helical membrane-spanning segment. Residues 289–295 (NRIGAKN) lie on the Cytoplasmic side of the membrane. The next 2 membrane-spanning stretches (helical) occupy residues 296–316 (ALLI…FATS) and 317–337 (AVEV…LLVG). At 338 to 353 (TFKYISSAFKGKLSAT) the chain is on the cytoplasmic side. A helical membrane pass occupies residues 354 to 374 (LFLIGFNLSKQLSSVVLSAWV). At 375-384 (GRMYDTVGFH) the chain is on the periplasmic side. A helical transmembrane segment spans residues 385–405 (QAYLILGCITLSFTVISLFTL). The Cytoplasmic segment spans residues 406–416 (KGSKTLLPATA).

Belongs to the major facilitator superfamily. Oligosaccharide:H(+) symporter (OHS) (TC 2.A.1.5) family.

Its subcellular location is the cell inner membrane. The enzyme catalyses lactose(in) + H(+)(in) = lactose(out) + H(+)(out). Its function is as follows. Responsible for transport of beta-galactosides into the cell, with the concomitant import of a proton (symport system). This chain is Lactose permease (lacY), found in Klebsiella oxytoca.